The sequence spans 556 residues: Membrane protein insertase YidC (556 aa).

The helical transmembrane segment at 7-27 threads the bilayer; sequence ILLVALAVVAYLMVLQWNQDY. Disordered regions lie at residues 35–59 and 126–152; these read ETAQ…GNAN and SSER…PQYS. A compositionally biased stretch (low complexity) spans 36 to 54; that stretch reads TAQSQPAAPALPDSPSATT. 4 helical membrane passes run 365-385, 435-455, 468-488, and 513-533; these read LLGN…LAFF, LGGC…YWVL, FWIT…IMGV, and PIIF…YWVV.

Belongs to the OXA1/ALB3/YidC family. Type 1 subfamily. Interacts with the Sec translocase complex via SecD. Specifically interacts with transmembrane segments of nascent integral membrane proteins during membrane integration.

Its subcellular location is the cell inner membrane. Its function is as follows. Required for the insertion and/or proper folding and/or complex formation of integral membrane proteins into the membrane. Involved in integration of membrane proteins that insert both dependently and independently of the Sec translocase complex, as well as at least some lipoproteins. Aids folding of multispanning membrane proteins. In Stutzerimonas stutzeri (strain A1501) (Pseudomonas stutzeri), this protein is Membrane protein insertase YidC.